A 292-amino-acid chain; its full sequence is mRNA export protein 33 (292 aa).

The interval 1-76 is disordered; sequence MPPKKAAKGK…RKRREEEKRA (76 aa). 2 stretches are compositionally biased toward basic and acidic residues: residues 9 to 26 and 58 to 76; these read GKGD…KKAA and KDAK…EKRA. The segment at 134–172 adopts a C3H1-type zinc-finger fold; it reads INTDIVCKFFLEACETGKYGWLWQCPNGNMTCIYKHALP.

It localises to the cytoplasm. Functionally, functions as a component of the nuclear pore complex (NPC). NPC components, collectively referred to as nucleoporins (NUPs), can play the role of both NPC structural components and of docking or interaction partners for transiently associated nuclear transport factors. Active directional transport is assured by both, a Phe-Gly (FG) repeat affinity gradient for these transport factors across the NPC and a transport cofactor concentration gradient across the nuclear envelope. Involved in the export of mRNA from the nucleus to the cytoplasm. May play a role in mitotic spindle formation and/or function. The protein is mRNA export protein 33 (mep33) of Schizosaccharomyces pombe (strain 972 / ATCC 24843) (Fission yeast).